A 352-amino-acid polypeptide reads, in one-letter code: MKMRTIAKTSLALGLLTTGAITVTTQSVKAEKIQSTKVDKVPTLKAERLAMINITAGANSATTQAANTRQERTPKLEKAPNTNEEKTSASKIEKISQPKQEEQKTLNISATPAPKQEQSQTTTESTTPKTKVTTPPSTNTPQPMQSTKSDTPQSPTIKQAQTDMTPKYEDLRAYYTKPSFEFEKQFGFMLKPWTTVRFMNVIPNRFIYKIALVGKDEKKYKDGPYDNIDVFIVLEDNKYQLKKYSVGGITKTNSKKVNHKVELSITKKDNQGMISRDVSEYMITKEEISLKELDFKLRKQLIEKHNLYGNMGSGTIVIKMKNGGKYTFELHKKLQEHRMAGTNIDNIEVNIK.

The N-terminal stretch at 1–30 (MKMRTIAKTSLALGLLTTGAITVTTQSVKA) is a signal peptide. Residues 61–165 (ATTQAANTRQ…TIKQAQTDMT (105 aa)) form a disordered region. The segment covering 69–104 (RQERTPKLEKAPNTNEEKTSASKIEKISQPKQEEQK) has biased composition (basic and acidic residues). The span at 114 to 141 (PKQEQSQTTTESTTPKTKVTTPPSTNTP) shows a compositional bias: low complexity. Residues 142–164 (QPMQSTKSDTPQSPTIKQAQTDM) show a composition bias toward polar residues. The sialyl Lewis X-binding stretch occupies residues 228-326 (IDVFIVLEDN…VIKMKNGGKY (99 aa)).

Belongs to the staphylococcal/streptococcal toxin family. As to quaternary structure, interacts with host TLR2 (via its extracellular domain).

The protein resides in the secreted. In terms of biological role, secreted protein that plays an essential role in immune innate response inhibition by interacting with and inhibiting host TLR2. In turn, bacteria recognition by immune cells is impaired and cytokine production is inhibited. Mechanistically, by interacting with TLR2, blocks ligand binding and thus inhibits activation. Second, by interacting with an already formed TLR2-lipopeptide complex, prevents TLR heterodimerization and downstream signaling. The interaction with host TLR2 does not involve sialyl Lewis X interactions. The chain is Staphylococcal superantigen-like 3 from Staphylococcus aureus (strain Newman).